The primary structure comprises 208 residues: Large ribosomal subunit protein uL3 (208 aa).

Glutamine 150 is modified (N5-methylglutamine).

The protein belongs to the universal ribosomal protein uL3 family. In terms of assembly, part of the 50S ribosomal subunit. Forms a cluster with proteins L14 and L19. In terms of processing, methylated by PrmB.

In terms of biological role, one of the primary rRNA binding proteins, it binds directly near the 3'-end of the 23S rRNA, where it nucleates assembly of the 50S subunit. This is Large ribosomal subunit protein uL3 from Buchnera aphidicola subsp. Cinara cedri (strain Cc).